The following is a 110-amino-acid chain: UPF0060 membrane protein RSp1275 (110 aa).

The next 4 membrane-spanning stretches (helical) occupy residues F8–L28, S33–L53, A63–A83, and I90–T110.

This sequence belongs to the UPF0060 family.

It is found in the cell inner membrane. In Ralstonia nicotianae (strain ATCC BAA-1114 / GMI1000) (Ralstonia solanacearum), this protein is UPF0060 membrane protein RSp1275.